A 673-amino-acid polypeptide reads, in one-letter code: Vasorin (673 aa).

The first 23 residues, 1 to 23 (MCSRVPLLLPLLLLLALGPGVQG), serve as a signal peptide directing secretion. Positions 24–51 (CPSGCQCSQPQTVFCTARQGTTVPRDVP) constitute an LRRNT domain. Residues 24–575 (CPSGCQCSQP…VTQAREGNLP (552 aa)) lie on the Extracellular side of the membrane. LRR repeat units follow at residues 52–74 (PDTVGLYVFENGITMLDAGSFAG), 77–98 (GLQLLDLSQNQIASLPSGVFQP), 101–122 (NLSNLDLTANRLHEITNETFRG), 125–146 (RLERLYLGKNRIRHIQPGAFDT), 149–170 (RLLELKLQDNELRALPPLRLPR), 171–191 (LLLLDLSHNSLLALEPGILDT), 193–214 (NVEALRLAGLGLQQLDEGLFSR), 217–238 (NLHDLDVSDNQLERVPPVIRGL), 240–262 (GLTRLRLAGNTRIAQLRPEDLAG), and 265–287 (ALQELDVSNLSLQALPGDLSGLF). An N-linked (GlcNAc...) asparagine glycan is attached at N101. N117 carries N-linked (GlcNAc...) (complex) asparagine glycosylation. N273 carries N-linked (GlcNAc...) asparagine glycosylation. The region spanning 298 to 351 (NPFNCVCPLSWFGPWVRESHVTLASPEETRCHFPPKNAGRLLLELDYADFGCPA) is the LRRCT domain. A compositionally biased stretch (low complexity) spans 358–370 (VPTTRPVVREPTA). The disordered stretch occupies residues 358 to 404 (VPTTRPVVREPTALSSSLAPTWLSPTEPATEAPSPPSTAPPTVGPVP). Residues 390–404 (PSPPSTAPPTVGPVP) are compositionally biased toward pro residues. Residues 405 to 442 (QPQDCPPSTCLNGGTCHLGTRHHLACLCPEGFTGLYCE) enclose the EGF-like domain. 3 disulfides stabilise this stretch: C409–C420, C414–C430, and C432–C441. The Fibronectin type-III domain occupies 460-558 (PPRSLTLGIE…ACGEAHTPPA (99 aa)). N-linked (GlcNAc...) asparagine glycosylation is found at N500 and N528. The helical transmembrane segment at 576–596 (LLIAPALAAVLLAALAAVGAA) threads the bilayer. At 597-673 (YCVRRGRAMA…QSPLHAKPYI (77 aa)) the chain is on the cytoplasmic side.

As to quaternary structure, interacts with TGFB1, TGFB2 and TGFB3. In terms of processing, N-glycosylated. N-glycan heterogeneity at Asn-117: Hex5HexNAc4 (minor), dHex1Hex5HexNAc4 (major), Hex6HexNAc5 (minor) and dHex1Hex6HexNAc5 (minor). Expressed at highest levels in aorta, at intermediate levels in kidney and placenta and at lowest levels in brain, heart, liver, lung and skeletal muscle. Within the aorta, the strongest expression is found in the tunica media of the proximal ascending aorta, the descending thoracic aorta, the abdominal aorta and the coronary arteries. Within the kidney, expression is found in the interstitial cells.

Its subcellular location is the membrane. It is found in the secreted. Functionally, may act as an inhibitor of TGF-beta signaling. This Homo sapiens (Human) protein is Vasorin (VASN).